Here is a 462-residue protein sequence, read N- to C-terminus: Nuclear factor interleukin-3-regulated protein (462 aa).

Lys-24 is covalently cross-linked (Glycyl lysine isopeptide (Lys-Gly) (interchain with G-Cter in SUMO2)). Positions 73-136 (DAMYWEKRRK…GLISSTAYAQ (64 aa)) constitute a bZIP domain. Positions 79 to 95 (KRRKNNEAAKRSREKRR) are basic motif. Residues 99–106 (LVLENKLI) are leucine-zipper. Disordered stretches follow at residues 189-237 (DVSE…DDRG) and 258-302 (SPPL…IHSP). Positions 201–210 (ESSVQGSCRS) are enriched in polar residues. A Glycyl lysine isopeptide (Lys-Gly) (interchain with G-Cter in SUMO2) cross-link involves residue Lys-214. Lys-219 participates in a covalent cross-link: Glycyl lysine isopeptide (Lys-Gly) (interchain with G-Cter in SUMO1); alternate. Lys-219 participates in a covalent cross-link: Glycyl lysine isopeptide (Lys-Gly) (interchain with G-Cter in SUMO2); alternate. Residues 227–237 (SYTREPRDDRG) are compositionally biased toward basic and acidic residues. A compositionally biased stretch (polar residues) spans 264 to 274 (VNRSSSNSPRT). Positions 299-363 (IHSPVELKHV…PIDMTSKRHF (65 aa)) are necessary for transcriptional repression and sufficient for interaction with DR1. Ser-301 bears the Phosphoserine mark. Residues Lys-306, Lys-314, Lys-326, Lys-332, Lys-337, and Lys-350 each participate in a glycyl lysine isopeptide (Lys-Gly) (interchain with G-Cter in SUMO2) cross-link. Ser-353 is modified (phosphoserine). Residues Lys-360, Lys-394, Lys-401, Lys-406, Lys-412, Lys-419, Lys-424, Lys-434, and Lys-448 each participate in a glycyl lysine isopeptide (Lys-Gly) (interchain with G-Cter in SUMO2) cross-link.

It belongs to the bZIP family. NFIL3 subfamily. As to quaternary structure, homodimer. Binds DNA as a dimer. Interacts with DR1. Interacts with PER2 and CRY2. Interacts with NR0B2. Interacts with MYSM1. As to expression, expressed in bladder stomach, thyroid, spinal cord, lymph node, trachea, adrenal gland, bone marrow and muscle.

It localises to the nucleus. Functionally, acts as a transcriptional regulator that recognizes and binds to the sequence 5'-[GA]TTA[CT]GTAA[CT]-3', a sequence present in many cellular and viral promoters. Represses transcription from promoters with activating transcription factor (ATF) sites. Represses promoter activity in osteoblasts. Represses transcriptional activity of PER1. Represses transcriptional activity of PER2 via the B-site on the promoter. Activates transcription from the interleukin-3 promoter in T-cells. Competes for the same consensus-binding site with PAR DNA-binding factors (DBP, HLF and TEF). Component of the circadian clock that acts as a negative regulator for the circadian expression of PER2 oscillation in the cell-autonomous core clock. Protects pro-B cells from programmed cell death. Represses the transcription of CYP2A5. Positively regulates the expression and activity of CES2 by antagonizing the repressive action of NR1D1 on CES2. Required for the development of natural killer cell precursors. The sequence is that of Nuclear factor interleukin-3-regulated protein (NFIL3) from Homo sapiens (Human).